Here is a 117-residue protein sequence, read N- to C-terminus: Large ribosomal subunit protein bL20 (117 aa).

The protein belongs to the bacterial ribosomal protein bL20 family.

Functionally, binds directly to 23S ribosomal RNA and is necessary for the in vitro assembly process of the 50S ribosomal subunit. It is not involved in the protein synthesizing functions of that subunit. The sequence is that of Large ribosomal subunit protein bL20 (rplT) from Rickettsia prowazekii (strain Madrid E).